The primary structure comprises 489 residues: MSLEFGFILINIFTAIVSFSTLSHALLHPSSVSHNVSRSRYYMTTNELWFNQTLDHESPNDHRKFRQRYYEFMDYFRSPDGPMFMIICGEGPCSGIANDYINVLAKKFQAGVVSLEHRYYGKSSPFNSLATENLKYLSSKQALYDLASFRQYYQESLNKKLNISSGGSDNPWFFFGISYSGALSAWFRLKFPHLTCGSLASSAVVRAIYEFSEFDQQIGESAGQECKLALQETNKLLELGLKVKNKAVKSLFNATELDVDADFLYLTADAAVMAFQYGNPDKLCVPLVEAKKNGSDLVVTYSTYVREYCMRIWGLRVRTYNRKHLRNTVVTADSAYRLWWFQACTELGYFQVAPKYDSVRSHQINTTFHLDLCKSLFGKDVYPKVDATNLYYGGDRLAATKIIFTNGSEDPWRHASKQNSTHEMPSYIIKCRNCGHGSDIRGCPQSPMVIEGKSNNCSLPDYVNKVRQQMVEHIDLWLSECRQSIRSSI.

The first 25 residues, 1 to 25 (MSLEFGFILINIFTAIVSFSTLSHA), serve as a signal peptide directing secretion. N-linked (GlcNAc...) asparagine glycosylation is found at Asn35, Asn51, and Asn162. Ser178 functions as the Charge relay system in the catalytic mechanism. Residues Asn253, Asn293, Asn365, and Asn406 are each glycosylated (N-linked (GlcNAc...) asparagine). Asp410 functions as the Charge relay system in the catalytic mechanism. N-linked (GlcNAc...) asparagine glycosylation occurs at Asn419. His436 functions as the Charge relay system in the catalytic mechanism. N-linked (GlcNAc...) asparagine glycosylation occurs at Asn456.

This sequence belongs to the peptidase S28 family.

It localises to the secreted. In terms of biological role, may be involved in a proteolytic pathway controlling the nuclear division phase of megagametogenesis. In Arabidopsis thaliana (Mouse-ear cress), this protein is Probable serine protease EDA2 (EDA2).